A 966-amino-acid polypeptide reads, in one-letter code: SH3 domain-binding protein 4 (966 aa).

The 60-residue stretch at Gly57–Tyr116 folds into the SH3 1 domain. The region spanning Thr322–Val457 is the ZU5 domain. The 71-residue stretch at Asn657–Lys727 folds into the SH3 2 domain.

As to quaternary structure, homodimer or homooligomer.

The protein resides in the membrane. It is found in the clathrin-coated pit. The protein localises to the cytoplasmic vesicle. It localises to the clathrin-coated vesicle. Its subcellular location is the nucleus. In terms of biological role, possible role in regulating endocytosis of the transferrin receptor at the plasma membrane. Alternatively, may function as a negative regulator of the amino acid-induced TOR signaling by inhibiting the formation of active Rag GTPase complexes. Preferentially binds inactive Rag GTPase complexes and prevents their interaction with the mTORC1 complex inhibiting its relocalization to lysosomes and its activation. Thereby, may indirectly regulate cell growth, proliferation and autophagy. This chain is SH3 domain-binding protein 4 (sh3bp4), found in Seriola quinqueradiata (Five-ray yellowtail).